Reading from the N-terminus, the 311-residue chain is Pyrimidine-specific ribonucleoside hydrolase RihA (311 aa).

His240 is a catalytic residue.

The protein belongs to the IUNH family. RihA subfamily.

Functionally, hydrolyzes with equal efficiency cytidine or uridine to ribose and cytosine or uracil, respectively. In Escherichia coli (strain K12 / MC4100 / BW2952), this protein is Pyrimidine-specific ribonucleoside hydrolase RihA.